Reading from the N-terminus, the 502-residue chain is D-alanine--D-alanyl carrier protein ligase (502 aa).

Residue 150 to 151 coordinates ATP; sequence TS. Position 195 (aspartate 195) interacts with D-alanine. 290-295 provides a ligand contact to ATP; sequence NTYGPT. Valine 299 serves as a coordination point for D-alanine. Residues aspartate 381 and lysine 490 each coordinate ATP. Lysine 490 provides a ligand contact to D-alanine.

This sequence belongs to the ATP-dependent AMP-binding enzyme family. DltA subfamily.

Its subcellular location is the cytoplasm. The enzyme catalyses holo-[D-alanyl-carrier protein] + D-alanine + ATP = D-alanyl-[D-alanyl-carrier protein] + AMP + diphosphate. It functions in the pathway cell wall biogenesis; lipoteichoic acid biosynthesis. Catalyzes the first step in the D-alanylation of lipoteichoic acid (LTA), the activation of D-alanine and its transfer onto the D-alanyl carrier protein (Dcp) DltC. In an ATP-dependent two-step reaction, forms a high energy D-alanyl-AMP intermediate, followed by transfer of the D-alanyl residue as a thiol ester to the phosphopantheinyl prosthetic group of the Dcp. D-alanylation of LTA plays an important role in modulating the properties of the cell wall in Gram-positive bacteria, influencing the net charge of the cell wall. In Bacillus licheniformis (strain ATCC 14580 / DSM 13 / JCM 2505 / CCUG 7422 / NBRC 12200 / NCIMB 9375 / NCTC 10341 / NRRL NRS-1264 / Gibson 46), this protein is D-alanine--D-alanyl carrier protein ligase.